We begin with the raw amino-acid sequence, 143 residues long: Large ribosomal subunit protein uL11 (143 aa).

Belongs to the universal ribosomal protein uL11 family. In terms of assembly, part of the ribosomal stalk of the 50S ribosomal subunit. Interacts with L10 and the large rRNA to form the base of the stalk. L10 forms an elongated spine to which L12 dimers bind in a sequential fashion forming a multimeric L10(L12)X complex. In terms of processing, one or more lysine residues are methylated.

Functionally, forms part of the ribosomal stalk which helps the ribosome interact with GTP-bound translation factors. This chain is Large ribosomal subunit protein uL11, found in Leptothrix cholodnii (strain ATCC 51168 / LMG 8142 / SP-6) (Leptothrix discophora (strain SP-6)).